We begin with the raw amino-acid sequence, 324 residues long: Coproporphyrin III ferrochelatase (324 aa).

Residues His-184 and Glu-266 each coordinate Fe(2+).

The protein belongs to the ferrochelatase family.

Its subcellular location is the cytoplasm. It catalyses the reaction Fe-coproporphyrin III + 2 H(+) = coproporphyrin III + Fe(2+). Its pathway is porphyrin-containing compound metabolism; protoheme biosynthesis. Its function is as follows. Involved in coproporphyrin-dependent heme b biosynthesis. Catalyzes the insertion of ferrous iron into coproporphyrin III to form Fe-coproporphyrin III. The sequence is that of Coproporphyrin III ferrochelatase from Lactiplantibacillus plantarum (strain ATCC BAA-793 / NCIMB 8826 / WCFS1) (Lactobacillus plantarum).